Consider the following 854-residue polypeptide: uncharacterized protein (854 aa).

Belongs to the PEP-utilizing enzyme family.

This is an uncharacterized protein from Mycobacterium tuberculosis (strain CDC 1551 / Oshkosh).